The following is a 188-amino-acid chain: MNGDDAFARRPRAGSQIPEKIQKAFDDIAKYFSKKEWEKMKSSEKIIYVYMKRKYEAMTKLGFKATLPPFMCNTGATDLQGNDFDNDRNHRNQVERSQMTFGRLQGIFPKIMPKKPAEVGNDSKEVPEASGLQNDGKQLCPPGKPTTSEKINKASGPKRGKHAWTHRLRERKQLVIYEEISDPEEDDE.

A KRAB-related domain is found at 20-83 (KIQKAFDDIA…TGATDLQGND (64 aa)). Residues 114–165 (KKPAEVGNDSKEVPEASGLQNDGKQLCPPGKPTTSEKINKASGPKRGKHAWT) are disordered. The segment covering 115–127 (KPAEVGNDSKEVP) has biased composition (basic and acidic residues). Phosphoserine is present on Ser-123. Basic residues predominate over residues 156–165 (GPKRGKHAWT).

The protein belongs to the SSX family. In terms of tissue distribution, not detected in any normal or tumor tissues.

Could act as a modulator of transcription. The chain is Putative protein SSX9 from Homo sapiens (Human).